Consider the following 395-residue polypeptide: Gastric triacylglycerol lipase (395 aa).

The signal sequence occupies residues 1 to 18 (MWLLLVTSVLSAFGGAHG). Asparagine 33 carries an N-linked (GlcNAc...) asparagine glycan. The AB hydrolase-1 domain maps to 81–376 (LQHGLIASAT…LPYNHLDFIW (296 aa)). Serine 171 functions as the Nucleophile in the catalytic mechanism. An intrachain disulfide couples cysteine 245 to cysteine 254. A glycan (N-linked (GlcNAc...) asparagine) is linked at asparagine 270. Active-site charge relay system residues include aspartate 342 and histidine 371.

Belongs to the AB hydrolase superfamily. Lipase family.

It localises to the secreted. The enzyme catalyses a triacylglycerol + H2O = a diacylglycerol + a fatty acid + H(+). The catalysed reaction is 1,2,3-tri-(9Z-octadecenoyl)-glycerol + H2O = 1,2-di-(9Z-octadecenoyl)-sn-glycerol + (9Z)-octadecenoate + H(+). It carries out the reaction 1,2,3-trioctanoylglycerol + H2O = 1,2-dioctanoyl-sn-glycerol + octanoate + H(+). Its function is as follows. Catalyzes the hydrolysis of triacylglycerols to yield free fatty acids, diacylglycerol, monoacylglycerol, and glycerol. Shows a preferential hydrolysis at the sn-3 position of triacylglycerol. This is Gastric triacylglycerol lipase (Lipf) from Mus musculus (Mouse).